A 261-amino-acid chain; its full sequence is tRNA pseudouridine synthase A (261 aa).

The active-site Nucleophile is the Asp-51. Position 109 (Tyr-109) interacts with substrate.

It belongs to the tRNA pseudouridine synthase TruA family. As to quaternary structure, homodimer.

The enzyme catalyses uridine(38/39/40) in tRNA = pseudouridine(38/39/40) in tRNA. In terms of biological role, formation of pseudouridine at positions 38, 39 and 40 in the anticodon stem and loop of transfer RNAs. The chain is tRNA pseudouridine synthase A from Shewanella frigidimarina (strain NCIMB 400).